A 532-amino-acid polypeptide reads, in one-letter code: MEYTKSIAECIKAIEVVNCFGNDKSLINSVEYDSRKVRAYSYDDKTGLKKGAAFFALPGIHTDGKKFINSAIENGAVCIFYEGDLNNHSCDEICFVQVNDVRKTMSKVSALLYDEPSRTLGVIGVTGTEGKSSTVSFIFQLLNLCGKKAGFFSTVEYSIDGNVIPNPEHQTTPESNVVQLRLAQMRDSGCSYAVVEASSHGLSPKTARLEDVIFDAGVFMNVTQEHLEFHGTIEQYRYDKANLFRALDKNPGKGFPIFGIVNYEDPSAPYFMEATQKNVYPFSTELKDLKKIEEYKGLFAKDIEESSSGIKFTLCDFSSRKEYGCELKLAGIFNVKNILASVLAVQRITGLDIACIIEKLPLVKPVKGRMMLIDEGQDFEVLIDYAHTPSSFMTIFPSIKERIKKSGGKVISLFGSGGERDVKKRPEQGRIAALYSDIVILADEDPRGEDSVELLEMIAAGCPEKKRGEELFIIPDRPSAIKKAFSLAGKNDAVLLLGKGHENSIIFKDRTMPYDEETTARKLLIGADCTNP.

Ser34 serves as a coordination point for UDP-N-acetyl-alpha-D-muramoyl-L-alanyl-D-glutamate. 127 to 133 (GTEGKSS) lines the ATP pocket. Residues 171–172 (TT), Ser198, and Arg208 contribute to the UDP-N-acetyl-alpha-D-muramoyl-L-alanyl-D-glutamate site. The residue at position 240 (Lys240) is an N6-carboxylysine.

This sequence belongs to the MurCDEF family. MurE subfamily. Post-translationally, carboxylation is probably crucial for Mg(2+) binding and, consequently, for the gamma-phosphate positioning of ATP.

The protein resides in the cytoplasm. It participates in cell wall biogenesis; peptidoglycan biosynthesis. In terms of biological role, catalyzes the addition of an amino acid to the nucleotide precursor UDP-N-acetylmuramoyl-L-alanyl-D-glutamate (UMAG) in the biosynthesis of bacterial cell-wall peptidoglycan. The polypeptide is UDP-N-acetylmuramyl-tripeptide synthetase (Treponema denticola (strain ATCC 35405 / DSM 14222 / CIP 103919 / JCM 8153 / KCTC 15104)).